The chain runs to 514 residues: Pentatricopeptide repeat-containing protein At4g26800 (514 aa).

PPR repeat units follow at residues 122-156 (DLYTCNILVNCFCRCFQPSSALSYLGKMMKLGIEP), 157-191 (DIVTASSLVNGFCLSNSIKDAVYVAGQMEKMGIKR), 192-226 (DVVVDTILIDTLCKNRLVVPALEVLKRMKDRGISP), 227-261 (NVVTYSSLITGLCKSGRLADAERRLHEMDSKKINP), 262-296 (NVITFSALIDAYAKRGKLSKVDSVYKMMIQMSIDP), 297-331 (NVFTYSSLIYGLCMHNRVDEAIKMLDLMISKGCTP), 332-366 (NVVTYSTLANGFFKSSRVDDGIKLLDDMPQRGVAA), 367-401 (NTVSCNTLIKGYFQAGKIDLALGVFGYMTSNGLIP), 402-436 (NIRSYNIVLAGLFANGEVEKALSRFEHMQKTRNDL), 437-471 (DIITYTIMIHGMCKACMVKEAYDLFYKLKFKRVEP), and 472-510 (DFKAYTIMIAELNRAGMRTEADALNRFYQKHVRQNESAP).

It belongs to the PPR family. P subfamily.

This Arabidopsis thaliana (Mouse-ear cress) protein is Pentatricopeptide repeat-containing protein At4g26800.